The sequence spans 430 residues: Putative FBD-associated F-box protein At5g56440 (430 aa).

The F-box domain maps to 1–49 (MDRISLLPDDVVFKILSFVPTKVVVSTNLLSKRWRYLWKHVPKLDYRDP). The region spanning 349 to 399 (QWEQPSSVPKCLISSLETVEWIDYKGREVEKKVVMYLLENSRQLKTMAIRS) is the FBD domain.

The sequence is that of Putative FBD-associated F-box protein At5g56440 from Arabidopsis thaliana (Mouse-ear cress).